The primary structure comprises 211 residues: Thiamine-phosphate synthase (211 aa).

4-amino-2-methyl-5-(diphosphooxymethyl)pyrimidine is bound by residues Q37–K41 and N69. 2 residues coordinate Mg(2+): D70 and D89. S108 lines the 4-amino-2-methyl-5-(diphosphooxymethyl)pyrimidine pocket. T134–T136 lines the 2-[(2R,5Z)-2-carboxy-4-methylthiazol-5(2H)-ylidene]ethyl phosphate pocket. Residue K137 participates in 4-amino-2-methyl-5-(diphosphooxymethyl)pyrimidine binding. Residues G166 and V186 to S187 contribute to the 2-[(2R,5Z)-2-carboxy-4-methylthiazol-5(2H)-ylidene]ethyl phosphate site.

Belongs to the thiamine-phosphate synthase family. It depends on Mg(2+) as a cofactor.

It carries out the reaction 2-[(2R,5Z)-2-carboxy-4-methylthiazol-5(2H)-ylidene]ethyl phosphate + 4-amino-2-methyl-5-(diphosphooxymethyl)pyrimidine + 2 H(+) = thiamine phosphate + CO2 + diphosphate. The enzyme catalyses 2-(2-carboxy-4-methylthiazol-5-yl)ethyl phosphate + 4-amino-2-methyl-5-(diphosphooxymethyl)pyrimidine + 2 H(+) = thiamine phosphate + CO2 + diphosphate. The catalysed reaction is 4-methyl-5-(2-phosphooxyethyl)-thiazole + 4-amino-2-methyl-5-(diphosphooxymethyl)pyrimidine + H(+) = thiamine phosphate + diphosphate. Its pathway is cofactor biosynthesis; thiamine diphosphate biosynthesis; thiamine phosphate from 4-amino-2-methyl-5-diphosphomethylpyrimidine and 4-methyl-5-(2-phosphoethyl)-thiazole: step 1/1. Condenses 4-methyl-5-(beta-hydroxyethyl)thiazole monophosphate (THZ-P) and 2-methyl-4-amino-5-hydroxymethyl pyrimidine pyrophosphate (HMP-PP) to form thiamine monophosphate (TMP). This Escherichia coli O157:H7 protein is Thiamine-phosphate synthase.